A 480-amino-acid polypeptide reads, in one-letter code: Iroquois-class homeodomain protein IRX-1 (480 aa).

Residues 127–189 (DPGRPKNATR…NARRRLKKEN (63 aa)) constitute a DNA-binding region (homeobox; TALE-type). 3 disordered regions span residues 190–285 (KVTW…LGLV), 318–354 (SLAETATSPDGAPKASPPPPSSHASAHGPPSGSPLQH), and 401–480 (PHGP…LPSA). Positions 210–232 (TEGDPEKAEDDEEIDLESIDIDQ) are enriched in acidic residues. Serine 241 carries the phosphoserine modification. Low complexity predominate over residues 254 to 263 (ARVAPPASAR). Residues 264 to 280 (DQSSPLSAAETLKSQDS) are compositionally biased toward polar residues. A compositionally biased stretch (low complexity) spans 339–351 (SHASAHGPPSGSP).

This sequence belongs to the TALE/IRO homeobox family. In terms of tissue distribution, expressed in specific and overlapping patterns with Irx1 and Irx2 in the developing and adult metanephric kidney. In the adult metanephros, renal expression is found in the loop of Henle in the S3 proximal tubule segment and in the thick ascending limb (TAL) of the distal tubule.

Its subcellular location is the nucleus. The polypeptide is Iroquois-class homeodomain protein IRX-1 (Irx1) (Mus musculus (Mouse)).